The primary structure comprises 226 residues: 2,3-bisphosphoglycerate-dependent phosphoglycerate mutase (226 aa).

Substrate is bound by residues 8–15, 21–22, Arg-58, 109–112, Lys-120, 136–137, and 180–181; these read RHGQSVWN, TG, ERMY, RR, and GN. Residue His-9 is the Tele-phosphohistidine intermediate of the active site. The active-site Proton donor/acceptor is the Glu-109.

This sequence belongs to the phosphoglycerate mutase family. BPG-dependent PGAM subfamily.

The enzyme catalyses (2R)-2-phosphoglycerate = (2R)-3-phosphoglycerate. The protein operates within carbohydrate degradation; glycolysis; pyruvate from D-glyceraldehyde 3-phosphate: step 3/5. Functionally, catalyzes the interconversion of 2-phosphoglycerate and 3-phosphoglycerate. This chain is 2,3-bisphosphoglycerate-dependent phosphoglycerate mutase, found in Chlamydia trachomatis serovar A (strain ATCC VR-571B / DSM 19440 / HAR-13).